The following is a 355-amino-acid chain: UDP-3-O-acylglucosamine N-acyltransferase (355 aa).

The active-site Proton acceptor is H258.

This sequence belongs to the transferase hexapeptide repeat family. LpxD subfamily. Homotrimer.

The enzyme catalyses a UDP-3-O-[(3R)-3-hydroxyacyl]-alpha-D-glucosamine + a (3R)-hydroxyacyl-[ACP] = a UDP-2-N,3-O-bis[(3R)-3-hydroxyacyl]-alpha-D-glucosamine + holo-[ACP] + H(+). It participates in bacterial outer membrane biogenesis; LPS lipid A biosynthesis. In terms of biological role, catalyzes the N-acylation of UDP-3-O-acylglucosamine using 3-hydroxyacyl-ACP as the acyl donor. Is involved in the biosynthesis of lipid A, a phosphorylated glycolipid that anchors the lipopolysaccharide to the outer membrane of the cell. This is UDP-3-O-acylglucosamine N-acyltransferase from Bradyrhizobium sp. (strain ORS 278).